A 114-amino-acid polypeptide reads, in one-letter code: Iron-sulfur cluster insertion protein ErpA (114 aa).

Cysteine 42, cysteine 106, and cysteine 108 together coordinate iron-sulfur cluster.

It belongs to the HesB/IscA family. In terms of assembly, homodimer. Iron-sulfur cluster serves as cofactor.

Required for insertion of 4Fe-4S clusters for at least IspG. This Enterobacter sp. (strain 638) protein is Iron-sulfur cluster insertion protein ErpA.